Here is a 265-residue protein sequence, read N- to C-terminus: Glutamate racemase (265 aa).

Substrate-binding positions include 9–10 (DS) and 41–42 (YG). Residue Cys72 is the Proton donor/acceptor of the active site. 73 to 74 (NT) lines the substrate pocket. Cys183 functions as the Proton donor/acceptor in the catalytic mechanism. A substrate-binding site is contributed by 184–185 (TH).

It belongs to the aspartate/glutamate racemases family.

It carries out the reaction L-glutamate = D-glutamate. It functions in the pathway cell wall biogenesis; peptidoglycan biosynthesis. Functionally, provides the (R)-glutamate required for cell wall biosynthesis. The sequence is that of Glutamate racemase from Lysinibacillus sphaericus (strain C3-41).